Here is a 64-residue protein sequence, read N- to C-terminus: Large ribosomal subunit protein bL35 (64 aa).

2 stretches are compositionally biased toward basic residues: residues 1 to 26 and 33 to 44; these read MPKMKTHRGAAKRFKKTGTGKIKRSK and LTKKSPKRKRKL. The interval 1 to 44 is disordered; that stretch reads MPKMKTHRGAAKRFKKTGTGKIKRSKAYTSHILTKKSPKRKRKL.

The protein belongs to the bacterial ribosomal protein bL35 family.

The protein is Large ribosomal subunit protein bL35 of Alkaliphilus oremlandii (strain OhILAs) (Clostridium oremlandii (strain OhILAs)).